A 392-amino-acid polypeptide reads, in one-letter code: Homeobox protein engrailed-1 (392 aa).

Disordered stretches follow at residues 1-100 (MEEQ…AQLH), 132-164 (ARGG…TRAP), 219-251 (KPSD…PAIL), and 282-306 (SDRP…DKRP). The span at 14–36 (SALGAAAAATPGGLSLSLSPGAS) shows a compositional bias: low complexity. 2 stretches are compositionally biased toward pro residues: residues 51–66 (SPQP…PCLP) and 75–84 (PPHPPPPPPQ). Residues 85–100 (HLAAPAHQPQPAAQLH) show a composition bias toward low complexity. Gly residues predominate over residues 223–236 (TGGGGSGGGAGSPG). The homeobox DNA-binding region spans 303 to 362 (DKRPRTAFTAEQLQRLKAEFQANRYITEQRRQTLAQELSLNESQIKIWFQNKRAKIKKAT).

Belongs to the engrailed homeobox family.

The protein localises to the nucleus. Functionally, required for proper formation of the apical ectodermal ridge and correct dorsal-ventral patterning in the limb. The protein is Homeobox protein engrailed-1 (EN1) of Homo sapiens (Human).